The chain runs to 379 residues: Succinyl-diaminopimelate desuccinylase (379 aa).

Residue H70 coordinates Zn(2+). Residue D72 is part of the active site. Zn(2+) is bound at residue D103. The active-site Proton acceptor is the E137. Zn(2+) contacts are provided by E138, E166, and H352.

It belongs to the peptidase M20A family. DapE subfamily. In terms of assembly, homodimer. It depends on Zn(2+) as a cofactor. The cofactor is Co(2+).

It carries out the reaction N-succinyl-(2S,6S)-2,6-diaminopimelate + H2O = (2S,6S)-2,6-diaminopimelate + succinate. The protein operates within amino-acid biosynthesis; L-lysine biosynthesis via DAP pathway; LL-2,6-diaminopimelate from (S)-tetrahydrodipicolinate (succinylase route): step 3/3. Functionally, catalyzes the hydrolysis of N-succinyl-L,L-diaminopimelic acid (SDAP), forming succinate and LL-2,6-diaminopimelate (DAP), an intermediate involved in the bacterial biosynthesis of lysine and meso-diaminopimelic acid, an essential component of bacterial cell walls. This is Succinyl-diaminopimelate desuccinylase from Burkholderia mallei (strain NCTC 10247).